Consider the following 388-residue polypeptide: ATP phosphoribosyltransferase regulatory subunit (388 aa).

It belongs to the class-II aminoacyl-tRNA synthetase family. HisZ subfamily. In terms of assembly, heteromultimer composed of HisG and HisZ subunits.

It is found in the cytoplasm. It functions in the pathway amino-acid biosynthesis; L-histidine biosynthesis; L-histidine from 5-phospho-alpha-D-ribose 1-diphosphate: step 1/9. In terms of biological role, required for the first step of histidine biosynthesis. May allow the feedback regulation of ATP phosphoribosyltransferase activity by histidine. In Acinetobacter baumannii (strain SDF), this protein is ATP phosphoribosyltransferase regulatory subunit.